Here is a 408-residue protein sequence, read N- to C-terminus: tRNA(Met) cytidine acetate ligase (408 aa).

ATP contacts are provided by residues 7 to 20 (IVEYNPFHNGHKYH), Gly102, Asn170, and 195 to 196 (RI).

Belongs to the TmcAL family.

It localises to the cytoplasm. It catalyses the reaction cytidine(34) in elongator tRNA(Met) + acetate + ATP = N(4)-acetylcytidine(34) in elongator tRNA(Met) + AMP + diphosphate. Its function is as follows. Catalyzes the formation of N(4)-acetylcytidine (ac(4)C) at the wobble position of elongator tRNA(Met), using acetate and ATP as substrates. First activates an acetate ion to form acetyladenylate (Ac-AMP) and then transfers the acetyl group to tRNA to form ac(4)C34. In Clostridium kluyveri (strain NBRC 12016), this protein is tRNA(Met) cytidine acetate ligase.